Consider the following 61-residue polypeptide: Putative protein RenD (61 aa).

This is Putative protein RenD (renD) from Escherichia coli (strain K12).